A 163-amino-acid polypeptide reads, in one-letter code: NADH-quinone oxidoreductase subunit I (163 aa).

4Fe-4S ferredoxin-type domains follow at residues 54–84 and 94–123; these read LRRY…IESD and TRYD…ETPI. Residues Cys-64, Cys-67, Cys-70, Cys-74, Cys-103, Cys-106, Cys-109, and Cys-113 each coordinate [4Fe-4S] cluster.

The protein belongs to the complex I 23 kDa subunit family. NDH-1 is composed of 14 different subunits. Subunits NuoA, H, J, K, L, M, N constitute the membrane sector of the complex. It depends on [4Fe-4S] cluster as a cofactor.

It localises to the cell inner membrane. The catalysed reaction is a quinone + NADH + 5 H(+)(in) = a quinol + NAD(+) + 4 H(+)(out). NDH-1 shuttles electrons from NADH, via FMN and iron-sulfur (Fe-S) centers, to quinones in the respiratory chain. The immediate electron acceptor for the enzyme in this species is believed to be ubiquinone. Couples the redox reaction to proton translocation (for every two electrons transferred, four hydrogen ions are translocated across the cytoplasmic membrane), and thus conserves the redox energy in a proton gradient. This chain is NADH-quinone oxidoreductase subunit I, found in Cupriavidus pinatubonensis (strain JMP 134 / LMG 1197) (Cupriavidus necator (strain JMP 134)).